The sequence spans 265 residues: Small ribosomal subunit protein uS2 (265 aa).

Positions 226 to 265 (AAAPNSASVREEEFSADAADEGKGRRAPAKKGDKKADAAE) are disordered. Basic and acidic residues predominate over residues 245–265 (DEGKGRRAPAKKGDKKADAAE).

This sequence belongs to the universal ribosomal protein uS2 family.

This is Small ribosomal subunit protein uS2 from Xanthomonas axonopodis pv. citri (strain 306).